Reading from the N-terminus, the 224-residue chain is MHPEAKEPDCGFSEVLPRELGSLFSDTYTEESHYAFCGTELRITQHYGANLGVAAPVWDAALFLCGYFEEQKLDFKGKKVIELGAGTGIVGILVSLLGGHVTLTDLPHALSQIQKNVSANVSSNNPPQVCALSWGLDQEKFPQDYDFVLGADIVYLHDTYPLLIQTLQYLCGPQTSIFLSSKMRQEHGTMHFFQDILPQYFASELVKRNKDEEINIYKVTRYQN.

Residues Trp58, 84–86 (GAG), Asp105, Trp134, and Ala151 contribute to the S-adenosyl-L-methionine site.

This sequence belongs to the methyltransferase superfamily. METTL21 family.

It is found in the cytoplasm. Its subcellular location is the cytoskeleton. The protein resides in the microtubule organizing center. The protein localises to the centrosome. The catalysed reaction is L-lysyl-[protein] + 3 S-adenosyl-L-methionine = N(6),N(6),N(6)-trimethyl-L-lysyl-[protein] + 3 S-adenosyl-L-homocysteine + 3 H(+). It carries out the reaction L-lysyl-[protein] + S-adenosyl-L-methionine = N(6)-methyl-L-lysyl-[protein] + S-adenosyl-L-homocysteine + H(+). The enzyme catalyses N(6)-methyl-L-lysyl-[protein] + S-adenosyl-L-methionine = N(6),N(6)-dimethyl-L-lysyl-[protein] + S-adenosyl-L-homocysteine + H(+). It catalyses the reaction N(6),N(6)-dimethyl-L-lysyl-[protein] + S-adenosyl-L-methionine = N(6),N(6),N(6)-trimethyl-L-lysyl-[protein] + S-adenosyl-L-homocysteine + H(+). Protein-lysine methyltransferase that selectively mono-, di- and trimethylates 'Lys-165' of the translation elongation factors EEF1A1 and EEF1A2 in an aminoacyl-tRNA and GTP-dependent manner. EEF1A1 methylation by EEF1AKMT3 is dynamic as well as inducible by stress conditions, such as ER-stress, and plays a regulatory role on mRNA translation. This is EEF1A lysine methyltransferase 3 from Xenopus tropicalis (Western clawed frog).